A 1244-amino-acid polypeptide reads, in one-letter code: Putative late blight resistance protein homolog R1A-4 (1244 aa).

2 coiled-coil regions span residues 411 to 434 (RYSD…ESLQ) and 526 to 548 (PRMN…QLLN). The region spanning 527-755 (RMNEEIVGFK…ECWEQVANDL (229 aa)) is the NB-ARC domain. Residue 560 to 567 (GMPGLGKT) participates in ATP binding. LRR repeat units follow at residues 978–1004 (LWNL…VWDM), 1079–1103 (PIRL…ISAP), 1127–1150 (LKNL…KVSN), 1153–1178 (FPQL…AFPN), and 1213–1237 (ESVV…NFKL).

Belongs to the disease resistance NB-LRR family.

It is found in the cytoplasm. The protein localises to the membrane. In terms of biological role, confers resistance to late blight (Phytophthora infestans) races carrying the avirulence gene Avr1. Resistance proteins guard the plant against pathogens that contain an appropriate avirulence protein via an indirect interaction with this avirulence protein. That triggers a defense system including the hypersensitive response, which restricts the pathogen growth. The protein is Putative late blight resistance protein homolog R1A-4 (R1A-4) of Solanum demissum (Wild potato).